We begin with the raw amino-acid sequence, 20 residues long: Hemocyanin subunit Ib (20 aa).

The disordered stretch occupies residues 1–20 (DSVGSTTAHKQQNINHLLDK).

Belongs to the tyrosinase family. Hemocyanin subfamily. Composed of 3 major subunits (IB, II and III) and 1 minor subunit (IA) which form homohexamers and heterohexamers. May also form larger structures. Hemolymph.

The protein localises to the secreted. It localises to the extracellular space. Functionally, hemocyanins are copper-containing oxygen carriers occurring freely dissolved in the hemolymph of many mollusks and arthropods. In Panulirus japonicus (Japanese spiny lobster), this protein is Hemocyanin subunit Ib.